The following is a 234-amino-acid chain: Purine nucleoside phosphorylase DeoD-type (234 aa).

His5 lines the a purine D-ribonucleoside pocket. Residues Gly21, Arg25, Arg44, and Arg88–Thr91 each bind phosphate. A purine D-ribonucleoside is bound by residues Asp180–Glu182 and Ser204–Asp205. Asp205 acts as the Proton donor in catalysis.

It belongs to the PNP/UDP phosphorylase family. Homohexamer; trimer of homodimers.

It catalyses the reaction a purine D-ribonucleoside + phosphate = a purine nucleobase + alpha-D-ribose 1-phosphate. It carries out the reaction a purine 2'-deoxy-D-ribonucleoside + phosphate = a purine nucleobase + 2-deoxy-alpha-D-ribose 1-phosphate. Catalyzes the reversible phosphorolytic breakdown of the N-glycosidic bond in the beta-(deoxy)ribonucleoside molecules, with the formation of the corresponding free purine bases and pentose-1-phosphate. This Buchnera aphidicola subsp. Acyrthosiphon pisum (strain APS) (Acyrthosiphon pisum symbiotic bacterium) protein is Purine nucleoside phosphorylase DeoD-type.